The sequence spans 480 residues: UDP-glucose 6-dehydrogenase 3 (480 aa).

NAD(+) contacts are provided by residues Gly8–Gly13, Asp33, Arg38, Val86–Thr90, Ser127–Thr128, and Glu161. Substrate is bound by residues Glu157 to Glu161, Lys216 to Leu223, and Arg256 to Gly269. Cys272 serves as the catalytic Nucleophile. Cys272–Lys275 lines the NAD(+) pocket. Phe334–Lys335 provides a ligand contact to substrate. Arg342 provides a ligand contact to NAD(+). Position 393 is a phosphoserine (Ser393). Arg447 serves as a coordination point for substrate.

Belongs to the UDP-glucose/GDP-mannose dehydrogenase family.

It catalyses the reaction UDP-alpha-D-glucose + 2 NAD(+) + H2O = UDP-alpha-D-glucuronate + 2 NADH + 3 H(+). It functions in the pathway nucleotide-sugar biosynthesis; UDP-alpha-D-glucuronate biosynthesis; UDP-alpha-D-glucuronate from UDP-alpha-D-glucose: step 1/1. Its function is as follows. Involved in the biosynthesis of UDP-glucuronic acid (UDP-GlcA), providing nucleotide sugars for cell-wall polymers. The protein is UDP-glucose 6-dehydrogenase 3 (UGD3) of Oryza sativa subsp. japonica (Rice).